The primary structure comprises 351 residues: Histidinol-phosphate aminotransferase (351 aa).

An N6-(pyridoxal phosphate)lysine modification is found at lysine 214.

The protein belongs to the class-II pyridoxal-phosphate-dependent aminotransferase family. Histidinol-phosphate aminotransferase subfamily. Pyridoxal 5'-phosphate serves as cofactor.

The enzyme catalyses L-histidinol phosphate + 2-oxoglutarate = 3-(imidazol-4-yl)-2-oxopropyl phosphate + L-glutamate. The protein operates within amino-acid biosynthesis; L-histidine biosynthesis; L-histidine from 5-phospho-alpha-D-ribose 1-diphosphate: step 7/9. This Methanosphaerula palustris (strain ATCC BAA-1556 / DSM 19958 / E1-9c) protein is Histidinol-phosphate aminotransferase.